The chain runs to 595 residues: Arginine--tRNA ligase (595 aa).

Residues alanine 132–histidine 142 carry the 'HIGH' region motif.

It belongs to the class-I aminoacyl-tRNA synthetase family. As to quaternary structure, monomer.

Its subcellular location is the cytoplasm. It catalyses the reaction tRNA(Arg) + L-arginine + ATP = L-arginyl-tRNA(Arg) + AMP + diphosphate. This Cupriavidus necator (strain ATCC 17699 / DSM 428 / KCTC 22496 / NCIMB 10442 / H16 / Stanier 337) (Ralstonia eutropha) protein is Arginine--tRNA ligase.